The primary structure comprises 317 residues: Acetylglutamate kinase (317 aa).

Substrate-binding positions include 70 to 71 (GG), Arg92, and Asn191.

The protein belongs to the acetylglutamate kinase family. ArgB subfamily.

The protein resides in the cytoplasm. It catalyses the reaction N-acetyl-L-glutamate + ATP = N-acetyl-L-glutamyl 5-phosphate + ADP. It participates in amino-acid biosynthesis; L-arginine biosynthesis; N(2)-acetyl-L-ornithine from L-glutamate: step 2/4. Its function is as follows. Catalyzes the ATP-dependent phosphorylation of N-acetyl-L-glutamate. The sequence is that of Acetylglutamate kinase from Corynebacterium glutamicum (strain R).